Consider the following 710-residue polypeptide: Polyribonucleotide nucleotidyltransferase (710 aa).

Positions 488 and 494 each coordinate Mg(2+). Positions 555–615 (PVIKVISIDP…EKVDAAIEQI (61 aa)) constitute a KH domain. An S1 motif domain is found at 625-688 (GDVFSGKVTR…NLGRLQLEEF (64 aa)). Residues 688 to 710 (FSDSPDHKHGEKRSFKRHRKNDN) form a disordered region. A compositionally biased stretch (basic and acidic residues) spans 691–700 (SPDHKHGEKR). Positions 701–710 (SFKRHRKNDN) are enriched in basic residues.

It belongs to the polyribonucleotide nucleotidyltransferase family. The cofactor is Mg(2+).

The protein localises to the cytoplasm. The enzyme catalyses RNA(n+1) + phosphate = RNA(n) + a ribonucleoside 5'-diphosphate. In terms of biological role, involved in mRNA degradation. Catalyzes the phosphorolysis of single-stranded polyribonucleotides processively in the 3'- to 5'-direction. The protein is Polyribonucleotide nucleotidyltransferase of Pseudothermotoga lettingae (strain ATCC BAA-301 / DSM 14385 / NBRC 107922 / TMO) (Thermotoga lettingae).